The chain runs to 500 residues: MAKMGKYGLGFKWAPEFPWMLPNASEKLGNPERSEEDGFCPSAAQEPKVKGKTLVNHVRVDCSRLPALECCVQSAIIRDIFVDEDPQKVEASTMMALQFGSAVLVKPSKRLSVQAWAKLGVLPKTPAMGLFKRFCLCNTRECVCDAHVAFQLFTVQPDGVCLGNGRFIGWFVPVTAIPEYAKQWLQPWSILLRKGGNKGSVTSGHSRRAVTMPVYDFNATDVVYADENQDDDADDPVVLVADTQEEDGVAKEQVDSADSEICVAHTVGQEMTEPDAVGSQTPIASAEETEVGEACDREGIAEVKATVCADALDACPDQVEAFDIEKVEDSILSELQTELNAPADKTYEDVLAFDAIYSETLSAFYAVPSDETHFKVCGFYSPAIERTNCWLRSTLIVMQSLPLEFKDLGMQKLWLSYKAGYDQCFVDKLVKSAPKSIILPQGGYVADFAYFFLSQCSFKVHANWRCLKCGMELKLQGLDAVFFYGDVVSHMCKCSFKAYF.

The CoV Nsp1 globular domain maps to 54–196 (LVNHVRVDCS…PWSILLRKGG (143 aa)). The region spanning 352–500 (AFDAIYSETL…MCKCSFKAYF (149 aa)) is the Peptidase C16 domain. The active-site For PL1-PRO activity is Cys389. A C4-type zinc finger spans residues 466 to 494 (CLKCGMELKLQGLDAVFFYGDVVSHMCKC).

Belongs to the coronaviruses polyprotein 1ab family.

Its function is as follows. The replicase polyprotein of coronaviruses is a multifunctional protein: it contains the activities necessary for the transcription of negative stranded RNA, leader RNA, subgenomic mRNAs and progeny virion RNA as well as proteinases responsible for the cleavage of the polyprotein into functional products. The papain-like proteinase 1 (PL1-PRO) is responsible for the cleavages located at the N-terminus of the replicase polyprotein. Activity of PL1-PRO is strongly dependent on zinc. Functionally, non-structural protein 1: binds to the 40S ribosomal subunit and inhibits host translation. The nsp1-40S ribosome complex further induces an endonucleolytic cleavage near the 5'UTR of host mRNAs, targeting them for degradation. By suppressing host gene expression, nsp1 facilitates efficient viral gene expression in infected cells and evasion from host immune response. The protein is Replicase polyprotein 1ab (rep) of Mus musculus (Mouse).